The chain runs to 119 residues: Putative membrane protein insertion efficiency factor (119 aa).

The protein belongs to the UPF0161 family.

Its subcellular location is the cell inner membrane. In terms of biological role, could be involved in insertion of integral membrane proteins into the membrane. This chain is Putative membrane protein insertion efficiency factor, found in Agrobacterium fabrum (strain C58 / ATCC 33970) (Agrobacterium tumefaciens (strain C58)).